The sequence spans 607 residues: Elongation factor 4 (607 aa).

A tr-type G domain is found at 6-188 (DRIRNFSIIA…AIVARIPAPK (183 aa)). Residues 18–23 (DHGKST) and 135–138 (NKID) each bind GTP.

Belongs to the TRAFAC class translation factor GTPase superfamily. Classic translation factor GTPase family. LepA subfamily.

It is found in the cell inner membrane. The catalysed reaction is GTP + H2O = GDP + phosphate + H(+). Required for accurate and efficient protein synthesis under certain stress conditions. May act as a fidelity factor of the translation reaction, by catalyzing a one-codon backward translocation of tRNAs on improperly translocated ribosomes. Back-translocation proceeds from a post-translocation (POST) complex to a pre-translocation (PRE) complex, thus giving elongation factor G a second chance to translocate the tRNAs correctly. Binds to ribosomes in a GTP-dependent manner. The protein is Elongation factor 4 of Rhizorhabdus wittichii (strain DSM 6014 / CCUG 31198 / JCM 15750 / NBRC 105917 / EY 4224 / RW1) (Sphingomonas wittichii).